The chain runs to 195 residues: Peptidyl-tRNA hydrolase (195 aa).

Tyrosine 14 is a binding site for tRNA. Histidine 19 acts as the Proton acceptor in catalysis. 2 residues coordinate tRNA: tyrosine 64 and asparagine 66.

This sequence belongs to the PTH family. Monomer.

Its subcellular location is the cytoplasm. It catalyses the reaction an N-acyl-L-alpha-aminoacyl-tRNA + H2O = an N-acyl-L-amino acid + a tRNA + H(+). In terms of biological role, hydrolyzes ribosome-free peptidyl-tRNAs (with 1 or more amino acids incorporated), which drop off the ribosome during protein synthesis, or as a result of ribosome stalling. Its function is as follows. Catalyzes the release of premature peptidyl moieties from peptidyl-tRNA molecules trapped in stalled 50S ribosomal subunits, and thus maintains levels of free tRNAs and 50S ribosomes. This chain is Peptidyl-tRNA hydrolase, found in Desulforudis audaxviator (strain MP104C).